The chain runs to 538 residues: Bifunctional purine biosynthesis protein PurH (538 aa).

Residues 8-158 (IPAPDKVEIK…KNHAYVTILT (151 aa)) form the MGS-like domain.

This sequence belongs to the PurH family.

The enzyme catalyses (6R)-10-formyltetrahydrofolate + 5-amino-1-(5-phospho-beta-D-ribosyl)imidazole-4-carboxamide = 5-formamido-1-(5-phospho-D-ribosyl)imidazole-4-carboxamide + (6S)-5,6,7,8-tetrahydrofolate. It carries out the reaction IMP + H2O = 5-formamido-1-(5-phospho-D-ribosyl)imidazole-4-carboxamide. It participates in purine metabolism; IMP biosynthesis via de novo pathway; 5-formamido-1-(5-phospho-D-ribosyl)imidazole-4-carboxamide from 5-amino-1-(5-phospho-D-ribosyl)imidazole-4-carboxamide (10-formyl THF route): step 1/1. The protein operates within purine metabolism; IMP biosynthesis via de novo pathway; IMP from 5-formamido-1-(5-phospho-D-ribosyl)imidazole-4-carboxamide: step 1/1. This chain is Bifunctional purine biosynthesis protein PurH, found in Rhizobium leguminosarum bv. trifolii (strain WSM2304).